Here is a 432-residue protein sequence, read N- to C-terminus: MSKIVKVLGREIIDSRGNPTVEAEVHLESGFVGMAAAPSGASTGSREALELRDGDKARFLGKGVLKAVAAVNGPIAEALIGKDAKNQAEIDQIMIDLDGTDNKANFGANAILAVSLANAKAAAAAKSMPLYAHIAELNGTPGVFSMPLPMMNIINGGEHADNNVDIQEFMIQPVGAKTLKEGLRIGAEVFHNLAKVLKSKGYSTAVGDEGGFAPNLKSNAEALEVIAEAVAAAGYELGKDVTLAMDCAASEFFDKEAGIYNMKGEGKTFTSEEFNHYLAELANQFPIVSIEDGLDESDWAGFKHQTELLGDKLQLVGDDLFVTNTKILAEGIEKGVANSILIKFNQIGSLTETLAAIKMAKDAGYTAVISHRSGETEDATIADLAVGTAAGQIKTGSMSRSDRVAKYNQLIRIEEALGEKAPFNGLKEVKGQ.

Gln167 serves as a coordination point for (2R)-2-phosphoglycerate. Catalysis depends on Glu209, which acts as the Proton donor. Asp246, Glu291, and Asp318 together coordinate Mg(2+). Positions 343, 372, 373, and 394 each coordinate (2R)-2-phosphoglycerate. The active-site Proton acceptor is Lys343.

This sequence belongs to the enolase family. Component of the RNA degradosome, a multiprotein complex involved in RNA processing and mRNA degradation. Mg(2+) is required as a cofactor.

The protein localises to the cytoplasm. Its subcellular location is the secreted. The protein resides in the cell surface. It catalyses the reaction (2R)-2-phosphoglycerate = phosphoenolpyruvate + H2O. It functions in the pathway carbohydrate degradation; glycolysis; pyruvate from D-glyceraldehyde 3-phosphate: step 4/5. Catalyzes the reversible conversion of 2-phosphoglycerate (2-PG) into phosphoenolpyruvate (PEP). It is essential for the degradation of carbohydrates via glycolysis. The chain is Enolase from Aliivibrio fischeri (strain MJ11) (Vibrio fischeri).